A 271-amino-acid polypeptide reads, in one-letter code: Exosome complex component Rrp42 (271 aa).

This sequence belongs to the RNase PH family. Rrp42 subfamily. As to quaternary structure, component of the archaeal exosome complex. Forms a hexameric ring-like arrangement composed of 3 Rrp41-Rrp42 heterodimers. The hexameric ring associates with a trimer of Rrp4 and/or Csl4 subunits.

The protein resides in the cytoplasm. Functionally, non-catalytic component of the exosome, which is a complex involved in RNA degradation. Contributes to the structuring of the Rrp41 active site. In Methanothermobacter thermautotrophicus (strain ATCC 29096 / DSM 1053 / JCM 10044 / NBRC 100330 / Delta H) (Methanobacterium thermoautotrophicum), this protein is Exosome complex component Rrp42.